A 1139-amino-acid chain; its full sequence is Retinoblastoma-like protein 2 (1139 aa).

The segment at 1 to 45 (MPSGGDQSPPPPPPPPAAAASDEEEEDDGEAEDAAPPAESPTPQI) is disordered. Pro residues predominate over residues 8–17 (SPPPPPPPPA). The segment covering 21–33 (SDEEEEDDGEAED) has biased composition (acidic residues). Position 413 is a phosphoserine (Ser413). Thr417 is subject to Phosphothreonine. The segment at 417 to 616 (TPVSTATHSL…EKIRDNENRV (200 aa)) is domain A. Residues 417 to 1024 (TPVSTATHSL…KQIKTFAMKY (608 aa)) form a pocket; binds E1A region. Ser420 is a glycosylation site (O-linked (GlcNAc) serine). The segment at 617–827 (PTCEEVMPPQ…KQGQSVTSSS (211 aa)) is spacer. Ser639 is modified (phosphoserine). Position 642 is a phosphothreonine (Thr642). A disordered region spans residues 654-678 (GGLGRSITSPTTLYDRYSSPPASTT). Phosphoserine is present on residues Ser662, Ser672, and Ser688. Positions 810-827 (ISPGGQQQKQGQSVTSSS) are enriched in low complexity. 2 disordered regions span residues 810–831 (ISPG…NRPR) and 933–999 (KGKR…DMEE). Residues 828 to 1024 (NRPRKTSSLS…KQIKTFAMKY (197 aa)) are domain B. Residues 941-955 (SGSSDSRSHQNSPTE) are compositionally biased toward polar residues. Phosphoserine is present on residues Ser948, Ser952, Ser966, Ser971, Ser972, and Ser973. Over residues 964 to 973 (DSSPVMRSSS) the composition is skewed to low complexity. The residue at position 974 (Thr974) is a Phosphothreonine. A compositionally biased stretch (pro residues) spans 977–987 (VPQPSSAPPTP). Phosphoserine is present on residues Ser981 and Ser982. At Thr986 the chain carries Phosphothreonine. Phosphoserine occurs at positions 1035, 1068, 1080, and 1112.

Belongs to the retinoblastoma protein (RB) family. Interacts with AATF. Interacts with KMT5B, KMT5C and USP4. Component of the DREAM complex (also named LINC complex) at least composed of E2F4, E2F5, LIN9, LIN37, LIN52, LIN54, MYBL1, MYBL2, RBL1, RBL2, RBBP4, TFDP1 and TFDP2. The complex exists in quiescent cells where it represses cell cycle-dependent genes. It dissociates in S phase when LIN9, LIN37, LIN52 and LIN54 form a subcomplex that binds to MYBL2. Interacts with RINT1. Interacts with PML (isoform PML-1, isoform PML-2, isoform PML-3, isoform PML-4 and isoform PML-5). Interacts with RBBP9. Interacts with CD53. In terms of assembly, (Microbial infection) Interacts with JC virus small t antigen. Post-translationally, during G0 and early G1 phase of the cell cycle, phosphorylated on Ser-639 and on 5 sites within the domain B. Phosphorylation on Ser-672 in G1 leads to its ubiquitin-dependent proteolysis.

The protein localises to the nucleus. Functionally, key regulator of entry into cell division. Directly involved in heterochromatin formation by maintaining overall chromatin structure and, in particular, that of constitutive heterochromatin by stabilizing histone methylation. Recruits and targets histone methyltransferases KMT5B and KMT5C, leading to epigenetic transcriptional repression. Controls histone H4 'Lys-20' trimethylation. Probably acts as a transcription repressor by recruiting chromatin-modifying enzymes to promoters. Potent inhibitor of E2F-mediated trans-activation, associates preferentially with E2F5. Binds to cyclins A and E. Binds to and may be involved in the transforming capacity of the adenovirus E1A protein. May act as a tumor suppressor. The polypeptide is Retinoblastoma-like protein 2 (RBL2) (Homo sapiens (Human)).